Here is a 370-residue protein sequence, read N- to C-terminus: Protein TEEBE (370 aa).

The signal sequence occupies residues 1–21 (MSLYHSLSIFLLLSLCHGSYS). An N-linked (GlcNAc...) asparagine glycan is attached at Asn-215.

As to expression, expressed in primary and lateral roots, stigmatic papillae and hypocotyls.

The protein localises to the secreted. It is found in the cell wall. Functionally, prevents hypocotyl epidermal cells elongation by modulating the pectin status in cell walls. Likely regulates pectin methylesterification degree during cell separation and elongation, including upon root-knot nematode Meloidogyne incognita infection. This Arabidopsis thaliana (Mouse-ear cress) protein is Protein TEEBE.